Here is a 936-residue protein sequence, read N- to C-terminus: Protein translocase subunit SecA (936 aa).

Residues glutamine 87, 105–109 (GEGKT), and aspartate 515 each bind ATP. Positions 920, 922, 931, and 932 each coordinate Zn(2+).

It belongs to the SecA family. As to quaternary structure, monomer and homodimer. Part of the essential Sec protein translocation apparatus which comprises SecA, SecYEG and auxiliary proteins SecDF-YajC and YidC. It depends on Zn(2+) as a cofactor.

It localises to the cell inner membrane. Its subcellular location is the cytoplasm. It carries out the reaction ATP + H2O + cellular proteinSide 1 = ADP + phosphate + cellular proteinSide 2.. In terms of biological role, part of the Sec protein translocase complex. Interacts with the SecYEG preprotein conducting channel. Has a central role in coupling the hydrolysis of ATP to the transfer of proteins into and across the cell membrane, serving both as a receptor for the preprotein-SecB complex and as an ATP-driven molecular motor driving the stepwise translocation of polypeptide chains across the membrane. The protein is Protein translocase subunit SecA of Paraburkholderia phymatum (strain DSM 17167 / CIP 108236 / LMG 21445 / STM815) (Burkholderia phymatum).